The following is a 180-amino-acid chain: Cell division protein ZapC (180 aa).

This sequence belongs to the ZapC family. In terms of assembly, interacts directly with FtsZ.

It localises to the cytoplasm. Its function is as follows. Contributes to the efficiency of the cell division process by stabilizing the polymeric form of the cell division protein FtsZ. Acts by promoting interactions between FtsZ protofilaments and suppressing the GTPase activity of FtsZ. The chain is Cell division protein ZapC from Vibrio cholerae serotype O1 (strain ATCC 39315 / El Tor Inaba N16961).